We begin with the raw amino-acid sequence, 80 residues long: RNA-binding protein Hfq (80 aa).

The region spanning D10 to I70 is the Sm domain.

This sequence belongs to the Hfq family. Homohexamer.

In terms of biological role, RNA chaperone that binds small regulatory RNA (sRNAs) and mRNAs to facilitate mRNA translational regulation in response to envelope stress, environmental stress and changes in metabolite concentrations. Also binds with high specificity to tRNAs. The polypeptide is RNA-binding protein Hfq (Clostridium perfringens (strain SM101 / Type A)).